A 140-amino-acid chain; its full sequence is Small ribosomal subunit protein uS12m (140 aa).

It belongs to the universal ribosomal protein uS12 family.

The protein resides in the mitochondrion. The sequence is that of Small ribosomal subunit protein uS12m (mrps12) from Dictyostelium discoideum (Social amoeba).